Here is a 54-residue protein sequence, read N- to C-terminus: Large ribosomal subunit protein bL32c (54 aa).

Belongs to the bacterial ribosomal protein bL32 family.

It is found in the plastid. The protein resides in the chloroplast. This Gossypium barbadense (Sea Island cotton) protein is Large ribosomal subunit protein bL32c.